Here is a 643-residue protein sequence, read N- to C-terminus: Mediator of RNA polymerase II transcription subunit 17 (643 aa).

Positions 53–82 (SDSEEDGAERARAGREQWKQEPEEDEGQLK) are disordered. Positions 60 to 73 (AERARAGREQWKQE) are enriched in basic and acidic residues.

It belongs to the Mediator complex subunit 17 family. As to quaternary structure, component of the Mediator complex.

The protein resides in the nucleus. Component of the Mediator complex, a coactivator involved in the regulated transcription of nearly all RNA polymerase II-dependent genes. Mediator functions as a bridge to convey information from gene-specific regulatory proteins to the basal RNA polymerase II transcription machinery. Mediator is recruited to promoters by direct interactions with regulatory proteins and serves as a scaffold for the assembly of a functional preinitiation complex with RNA polymerase II and the general transcription factors. This chain is Mediator of RNA polymerase II transcription subunit 17 (med17), found in Danio rerio (Zebrafish).